A 457-amino-acid chain; its full sequence is Bifunctional protein GlmU (457 aa).

The interval 1–227 (MTQLSVVILA…FMEVEGANNR (227 aa)) is pyrophosphorylase. UDP-N-acetyl-alpha-D-glucosamine is bound by residues 9-12 (LAAG), K23, Q74, 79-80 (GT), 101-103 (YGD), G138, E152, N167, and N225. D103 serves as a coordination point for Mg(2+). A Mg(2+)-binding site is contributed by N225. The segment at 228 to 248 (LQLAALERFYQKTQAEKLLLA) is linker. The segment at 249 to 457 (GVRLIDPARF…QRPTKKKIAD (209 aa)) is N-acetyltransferase. UDP-N-acetyl-alpha-D-glucosamine is bound by residues R331 and K349. Catalysis depends on H361, which acts as the Proton acceptor. UDP-N-acetyl-alpha-D-glucosamine is bound by residues Y364 and N375. Acetyl-CoA is bound by residues A378, 384–385 (NY), S403, A421, and R438.

The protein in the N-terminal section; belongs to the N-acetylglucosamine-1-phosphate uridyltransferase family. This sequence in the C-terminal section; belongs to the transferase hexapeptide repeat family. Homotrimer. It depends on Mg(2+) as a cofactor.

Its subcellular location is the cytoplasm. It catalyses the reaction alpha-D-glucosamine 1-phosphate + acetyl-CoA = N-acetyl-alpha-D-glucosamine 1-phosphate + CoA + H(+). The enzyme catalyses N-acetyl-alpha-D-glucosamine 1-phosphate + UTP + H(+) = UDP-N-acetyl-alpha-D-glucosamine + diphosphate. The protein operates within nucleotide-sugar biosynthesis; UDP-N-acetyl-alpha-D-glucosamine biosynthesis; N-acetyl-alpha-D-glucosamine 1-phosphate from alpha-D-glucosamine 6-phosphate (route II): step 2/2. Its pathway is nucleotide-sugar biosynthesis; UDP-N-acetyl-alpha-D-glucosamine biosynthesis; UDP-N-acetyl-alpha-D-glucosamine from N-acetyl-alpha-D-glucosamine 1-phosphate: step 1/1. It functions in the pathway bacterial outer membrane biogenesis; LPS lipid A biosynthesis. In terms of biological role, catalyzes the last two sequential reactions in the de novo biosynthetic pathway for UDP-N-acetylglucosamine (UDP-GlcNAc). The C-terminal domain catalyzes the transfer of acetyl group from acetyl coenzyme A to glucosamine-1-phosphate (GlcN-1-P) to produce N-acetylglucosamine-1-phosphate (GlcNAc-1-P), which is converted into UDP-GlcNAc by the transfer of uridine 5-monophosphate (from uridine 5-triphosphate), a reaction catalyzed by the N-terminal domain. This Actinobacillus pleuropneumoniae serotype 5b (strain L20) protein is Bifunctional protein GlmU.